Reading from the N-terminus, the 259-residue chain is 3-deoxy-manno-octulosonate cytidylyltransferase (259 aa).

Belongs to the KdsB family.

It is found in the cytoplasm. It catalyses the reaction 3-deoxy-alpha-D-manno-oct-2-ulosonate + CTP = CMP-3-deoxy-beta-D-manno-octulosonate + diphosphate. The protein operates within nucleotide-sugar biosynthesis; CMP-3-deoxy-D-manno-octulosonate biosynthesis; CMP-3-deoxy-D-manno-octulosonate from 3-deoxy-D-manno-octulosonate and CTP: step 1/1. Its pathway is bacterial outer membrane biogenesis; lipopolysaccharide biosynthesis. Activates KDO (a required 8-carbon sugar) for incorporation into bacterial lipopolysaccharide in Gram-negative bacteria. The sequence is that of 3-deoxy-manno-octulosonate cytidylyltransferase from Aeromonas salmonicida (strain A449).